The following is a 914-amino-acid chain: Translation initiation factor IF-2 (914 aa).

The tract at residues 58–160 (KTEKKQTAKK…EAEPKIEVMP (103 aa)) is disordered. Residues 70–91 (KKDTVKKDTVKKTAVKKDDSKA) are compositionally biased toward basic and acidic residues. Residues 92–103 (AKKTKPIAKKSA) show a composition bias toward basic residues. The segment covering 104-160 (PKTEKKVEKKVESKISKPDNEILEAKPEISKPEIKAEPKKEEIEQKQEAEPKIEVMP) has biased composition (basic and acidic residues). One can recognise a tr-type G domain in the interval 413 to 582 (ERVPVITIMG…LLQADLLELK (170 aa)). Residues 422–429 (GHVDHGKT) form a G1 region. 422 to 429 (GHVDHGKT) lines the GTP pocket. Residues 447-451 (GITQH) form a G2 region. The G3 stretch occupies residues 468-471 (DTPG). GTP contacts are provided by residues 468 to 472 (DTPGH) and 522 to 525 (NKMD). A G4 region spans residues 522 to 525 (NKMD). Positions 558 to 560 (SAK) are G5.

It belongs to the TRAFAC class translation factor GTPase superfamily. Classic translation factor GTPase family. IF-2 subfamily.

Its subcellular location is the cytoplasm. Functionally, one of the essential components for the initiation of protein synthesis. Protects formylmethionyl-tRNA from spontaneous hydrolysis and promotes its binding to the 30S ribosomal subunits. Also involved in the hydrolysis of GTP during the formation of the 70S ribosomal complex. This chain is Translation initiation factor IF-2, found in Campylobacter hominis (strain ATCC BAA-381 / DSM 21671 / CCUG 45161 / LMG 19568 / NCTC 13146 / CH001A).